The following is a 376-amino-acid chain: tRNA-specific 2-thiouridylase MnmA (376 aa).

ATP-binding positions include 9–16 (AMSGGIDS) and Met35. The Nucleophile role is filled by Cys105. Cysteines 105 and 202 form a disulfide. Residue Gly129 participates in ATP binding. Residues 151-153 (KDQ) form an interaction with tRNA region. Cys202 acts as the Cysteine persulfide intermediate in catalysis. The interval 312-313 (RY) is interaction with tRNA.

It belongs to the MnmA/TRMU family.

The protein resides in the cytoplasm. The catalysed reaction is S-sulfanyl-L-cysteinyl-[protein] + uridine(34) in tRNA + AH2 + ATP = 2-thiouridine(34) in tRNA + L-cysteinyl-[protein] + A + AMP + diphosphate + H(+). Catalyzes the 2-thiolation of uridine at the wobble position (U34) of tRNA, leading to the formation of s(2)U34. This chain is tRNA-specific 2-thiouridylase MnmA, found in Amoebophilus asiaticus (strain 5a2).